Consider the following 61-residue polypeptide: Photosystem II reaction center protein K (61 aa).

The propeptide occupies 1 to 24 (MINIFSFICIYLHSALYSSSFFFG). The chain crosses the membrane as a helical span at residues 40–60 (MPVIPLFFFLLAFVWQAAVSF).

The protein belongs to the PsbK family. PSII is composed of 1 copy each of membrane proteins PsbA, PsbB, PsbC, PsbD, PsbE, PsbF, PsbH, PsbI, PsbJ, PsbK, PsbL, PsbM, PsbT, PsbX, PsbY, PsbZ, Psb30/Ycf12, at least 3 peripheral proteins of the oxygen-evolving complex and a large number of cofactors. It forms dimeric complexes.

It localises to the plastid. Its subcellular location is the chloroplast thylakoid membrane. One of the components of the core complex of photosystem II (PSII). PSII is a light-driven water:plastoquinone oxidoreductase that uses light energy to abstract electrons from H(2)O, generating O(2) and a proton gradient subsequently used for ATP formation. It consists of a core antenna complex that captures photons, and an electron transfer chain that converts photonic excitation into a charge separation. The sequence is that of Photosystem II reaction center protein K from Pelargonium hortorum (Common geranium).